The chain runs to 130 residues: S-adenosylmethionine decarboxylase proenzyme (130 aa).

The Schiff-base intermediate with substrate; via pyruvic acid role is filled by Ser78. Ser78 carries the post-translational modification Pyruvic acid (Ser); by autocatalysis. The active-site Proton acceptor; for processing activity is His83. The active-site Proton donor; for catalytic activity is Cys98.

This sequence belongs to the prokaryotic AdoMetDC family. Type 1 subfamily. In terms of assembly, heterotetramer of two alpha and two beta chains arranged as a dimer of alpha/beta heterodimers. Pyruvate is required as a cofactor. Post-translationally, is synthesized initially as an inactive proenzyme. Formation of the active enzyme involves a self-maturation process in which the active site pyruvoyl group is generated from an internal serine residue via an autocatalytic post-translational modification. Two non-identical subunits are generated from the proenzyme in this reaction, and the pyruvate is formed at the N-terminus of the alpha chain, which is derived from the carboxyl end of the proenzyme. The post-translation cleavage follows an unusual pathway, termed non-hydrolytic serinolysis, in which the side chain hydroxyl group of the serine supplies its oxygen atom to form the C-terminus of the beta chain, while the remainder of the serine residue undergoes an oxidative deamination to produce ammonia and the pyruvoyl group blocking the N-terminus of the alpha chain.

It carries out the reaction S-adenosyl-L-methionine + H(+) = S-adenosyl 3-(methylsulfanyl)propylamine + CO2. It participates in amine and polyamine biosynthesis; S-adenosylmethioninamine biosynthesis; S-adenosylmethioninamine from S-adenosyl-L-methionine: step 1/1. In terms of biological role, catalyzes the decarboxylation of S-adenosylmethionine to S-adenosylmethioninamine (dcAdoMet), the propylamine donor required for the synthesis of the polyamines spermine and spermidine from the diamine putrescine. The sequence is that of S-adenosylmethionine decarboxylase proenzyme from Aeropyrum pernix (strain ATCC 700893 / DSM 11879 / JCM 9820 / NBRC 100138 / K1).